The primary structure comprises 205 residues: Guanylate kinase (205 aa).

The Guanylate kinase-like domain occupies glycine 6–threonine 184. Position 13–20 (glycine 13–glycine 20) interacts with ATP.

This sequence belongs to the guanylate kinase family.

The protein localises to the cytoplasm. It catalyses the reaction GMP + ATP = GDP + ADP. Its function is as follows. Essential for recycling GMP and indirectly, cGMP. The polypeptide is Guanylate kinase (Shouchella clausii (strain KSM-K16) (Alkalihalobacillus clausii)).